A 339-amino-acid chain; its full sequence is Chromo domain-containing protein cec-3 (339 aa).

Residues 1-21 (MSNEGSREESREPEAREGKSD) are disordered. One can recognise a Chromo domain in the interval 24–84 (FEVEKILAHK…KLKVTDKTEL (61 aa)). Residues 91-105 (QIKKNKSQKSKKRSK) show a composition bias toward basic residues. Disordered stretches follow at residues 91 to 199 (QIKK…APLS) and 215 to 272 (EEKA…QRTL). Basic and acidic residues-rich tracts occupy residues 106–117 (TVSDHESNHDSD) and 171–183 (AAMEVRDTRRNWL). Residues 184 to 193 (DEESSDDEAE) are compositionally biased toward acidic residues. Residues 230-241 (KPREVVIKKDPS) show a composition bias toward basic and acidic residues. The segment covering 242–251 (ESPVASASSV) has biased composition (low complexity).

In terms of tissue distribution, expressed in every cell of the embryo (at protein level). In adults, expressed predominantly in the head region and the germline.

It is found in the chromosome. The protein localises to the nucleus. Functionally, specifically recognizes and binds methylated 'Lys-9' of histone H3 (H3K9me), with highest preference for trimethylated 'Lys-9' (H3K9me3) followed by dimethylated 'Lys-9' (H3K9me2) followed by monomethylated 'Lys-9' (H3K9me1). Plays a role in maintaining correct unc-4 expression in the VC motor neurons where unc-4 is expressed in the vulval but not in the non-vulval VC neurons. This Caenorhabditis elegans protein is Chromo domain-containing protein cec-3 (cec-3).